We begin with the raw amino-acid sequence, 783 residues long: LPS-assembly protein LptD (783 aa).

The signal sequence occupies residues 1 to 24 (MSCFSRTFLAASISAALFAPQIQA).

It belongs to the LptD family. In terms of assembly, component of the lipopolysaccharide transport and assembly complex. Interacts with LptE and LptA.

It localises to the cell outer membrane. Its function is as follows. Together with LptE, is involved in the assembly of lipopolysaccharide (LPS) at the surface of the outer membrane. In Vibrio cholerae serotype O1 (strain ATCC 39315 / El Tor Inaba N16961), this protein is LPS-assembly protein LptD.